The primary structure comprises 485 residues: Glycogen synthase (485 aa).

Lys15 contacts ADP-alpha-D-glucose.

Belongs to the glycosyltransferase 1 family. Bacterial/plant glycogen synthase subfamily.

The catalysed reaction is [(1-&gt;4)-alpha-D-glucosyl](n) + ADP-alpha-D-glucose = [(1-&gt;4)-alpha-D-glucosyl](n+1) + ADP + H(+). The protein operates within glycan biosynthesis; glycogen biosynthesis. In terms of biological role, synthesizes alpha-1,4-glucan chains using ADP-glucose. The protein is Glycogen synthase of Thermosipho africanus (strain TCF52B).